We begin with the raw amino-acid sequence, 582 residues long: Adenine deaminase (582 aa).

This sequence belongs to the metallo-dependent hydrolases superfamily. Adenine deaminase family. The cofactor is Mn(2+).

It catalyses the reaction adenine + H2O + H(+) = hypoxanthine + NH4(+). The sequence is that of Adenine deaminase from Oceanobacillus iheyensis (strain DSM 14371 / CIP 107618 / JCM 11309 / KCTC 3954 / HTE831).